The chain runs to 235 residues: Ubiquinone/menaquinone biosynthesis C-methyltransferase UbiE (235 aa).

S-adenosyl-L-methionine contacts are provided by residues Thr-60, Asp-80, 106–107 (DV), and Ser-123.

Belongs to the class I-like SAM-binding methyltransferase superfamily. MenG/UbiE family.

It carries out the reaction a 2-demethylmenaquinol + S-adenosyl-L-methionine = a menaquinol + S-adenosyl-L-homocysteine + H(+). The enzyme catalyses a 2-methoxy-6-(all-trans-polyprenyl)benzene-1,4-diol + S-adenosyl-L-methionine = a 5-methoxy-2-methyl-3-(all-trans-polyprenyl)benzene-1,4-diol + S-adenosyl-L-homocysteine + H(+). Its pathway is quinol/quinone metabolism; menaquinone biosynthesis; menaquinol from 1,4-dihydroxy-2-naphthoate: step 2/2. It functions in the pathway cofactor biosynthesis; ubiquinone biosynthesis. Its function is as follows. Methyltransferase required for the conversion of demethylmenaquinol (DMKH2) to menaquinol (MKH2) and the conversion of 2-polyprenyl-6-methoxy-1,4-benzoquinol (DDMQH2) to 2-polyprenyl-3-methyl-6-methoxy-1,4-benzoquinol (DMQH2). This Bdellovibrio bacteriovorus (strain ATCC 15356 / DSM 50701 / NCIMB 9529 / HD100) protein is Ubiquinone/menaquinone biosynthesis C-methyltransferase UbiE.